The chain runs to 627 residues: Dual specificity testis-specific protein kinase 1 (627 aa).

Positions 1 to 36 are disordered; that stretch reads MAGERPPLRGPGPGEAPGEGPGGAGGGPGRGRPSSY. Gly residues predominate over residues 11–30; that stretch reads PGPGEAPGEGPGGAGGGPGR. A Protein kinase domain is found at 52 to 309; that stretch reads FDCAEKIGAG…TEITQHLEQI (258 aa). ATP is bound by residues 58-66 and Lys-81; that span reads IGAGFFSEV. Asp-170 serves as the catalytic Proton acceptor. A Phosphoserine; by autocatalysis modification is found at Ser-215. The segment covering 316–330 has biased composition (low complexity); that stretch reads ATPLAKPPLTKAPLT. 4 disordered regions span residues 316-373, 436-485, 500-519, and 532-565; these read ATPL…SWGD, RCRS…GLAP, CSSASQPWSPRSGPPLNNNP, and REPWNRAQHSLPRAAALERTEPSPPPSAPREPEE. Residue Arg-338 is modified to Omega-N-methylarginine. Residues 348–357 are compositionally biased toward basic and acidic residues; it reads PDPRLSRSRS. Positions 421–525 are required for interaction with YWHAB; that stretch reads VTTPDILVQP…NNNPPAVVVN (105 aa). The segment at 528–625 is required for interaction with PARVA; sequence QGWAREPWNR…PTPSLQLPGA (98 aa). Residues 528–627 are required for interaction with SPRED1 and SPRY2. Required for TESK1-mediated dephosphorylation of SPRY2 and SPRY2 inhibition of ERK phosphorylation; it reads QGWAREPWNR…PSLQLPGARS (100 aa).

This sequence belongs to the protein kinase superfamily. TKL Ser/Thr protein kinase family. In terms of assembly, interacts (via both C- and N-termini) with SPRY4 (via C-terminus); the interaction inhibits TESK1 kinase activity. Interacts with TAOK1; the interaction inhibits TAOK1 kinase activity. Interacts (via C-terminus) with SPRED1 (via C-terminus); the interaction inhibits TESK1 kinase activity. Interacts (via C-terminus) with PARVA/PARVIN (via C-terminus); the interaction inhibits TESK1 kinase activity. Interacts with YWHAB/14-3-3 beta; the interaction is dependent on the phosphorylation of TESK1 Ser-439 and inhibits TESK1 kinase activity. Interacts with SPRY1, SPRY3 and SPRED2. Interacts (via C-terminus) with SPRY2 (via C-terminus); the interaction disrupts SPRY2 interaction with PPP2CA/PP2A-C, possibly by vesicular sequestration of SPRY2. Therefore dephosphorylation of SPRY2 by the serine/threonine-protein phosphatase 2A (PP2A) holoenzyme is lost, inhibiting its interaction with GRB2. It depends on Mg(2+) as a cofactor. Mn(2+) serves as cofactor. Post-translationally, autophosphorylated on serine and tyrosine residues. As to expression, expressed in testes and brain (at protein level).

It is found in the cytoplasm. It localises to the perinuclear region. The protein localises to the cytoskeleton. Its subcellular location is the microtubule organizing center. The protein resides in the centrosome. It is found in the cell projection. It localises to the lamellipodium. It carries out the reaction L-seryl-[protein] + ATP = O-phospho-L-seryl-[protein] + ADP + H(+). It catalyses the reaction L-threonyl-[protein] + ATP = O-phospho-L-threonyl-[protein] + ADP + H(+). The catalysed reaction is L-tyrosyl-[protein] + ATP = O-phospho-L-tyrosyl-[protein] + ADP + H(+). With respect to regulation, activated by autophosphorylation on Ser-215. Kinase activity is inhibited by SPRED1. Functionally, dual specificity protein kinase activity catalyzing autophosphorylation and phosphorylation of exogenous substrates on both serine/threonine and tyrosine residues. Regulates the cellular cytoskeleton by enhancing actin stress fiber formation via phosphorylation of cofilin and by preventing microtubule breakdown via inhibition of TAOK1/MARKK kinase activity. Inhibits podocyte motility via regulation of actin cytoskeletal dynamics and phosphorylation of CFL1. Positively regulates integrin-mediated cell spreading, via phosphorylation of cofilin. Suppresses ciliogenesis via multiple pathways; phosphorylation of CFL1, suppression of ciliary vesicle directional trafficking to the ciliary base, and by facilitating YAP1 nuclear localization where it acts as a transcriptional corepressor of the TEAD4 target genes AURKA and PLK1. Probably plays a central role at and after the meiotic phase of spermatogenesis. The protein is Dual specificity testis-specific protein kinase 1 (Tesk1) of Mus musculus (Mouse).